The primary structure comprises 447 residues: MREIVHVQGGQCGNQIGAKFWEVISDEHGVDPTGTYHGDSDLQLERINVYYNEATGGRYVPRAVLMDLEPGTMDSVRAGPYGQLFRPDNFIFGQSGAGNNWAKGHYTEGAELIDSVLDVVRKEAEGCDCLQGFQITHSMGGGTGSGMGTLLIAKVREEYPDRMMCTYSVFPSPKVSDTVVEPYNATLSVHQLVENADEVMVIDNEALYDICFRTLKLTTPTYGDLNHLVSACISGVTCCLRFPGQLNSDLRKLAVNLIPFPRLHFFMIGFVPLTSRGSQQYRALTVPELTQQMFDAKNMMCAADPRHGRYLTASALFRGRMSTKEVDEQMLNVQNKNSSYFVEWIPNNIKASVCDIPPKGLKMSATFIGNSTAIQEMFKRVSEQFTAMFRRKAFLHWYTGEGMDEMEFTEAESNMNDLVSEYQQYQDATAEEEGEGDEEEAEGEAAA.

Gln11, Glu69, Ser138, Gly142, Thr143, Gly144, Asn204, and Asn226 together coordinate GTP. Glu69 lines the Mg(2+) pocket. Positions 424–447 (QYQDATAEEEGEGDEEEAEGEAAA) are disordered. Positions 429–447 (TAEEEGEGDEEEAEGEAAA) are enriched in acidic residues.

Belongs to the tubulin family. Dimer of alpha and beta chains. A typical microtubule is a hollow water-filled tube with an outer diameter of 25 nm and an inner diameter of 15 nM. Alpha-beta heterodimers associate head-to-tail to form protofilaments running lengthwise along the microtubule wall with the beta-tubulin subunit facing the microtubule plus end conferring a structural polarity. Microtubules usually have 13 protofilaments but different protofilament numbers can be found in some organisms and specialized cells. Mg(2+) is required as a cofactor.

It is found in the cytoplasm. Its subcellular location is the cytoskeleton. Tubulin is the major constituent of microtubules, a cylinder consisting of laterally associated linear protofilaments composed of alpha- and beta-tubulin heterodimers. Microtubules grow by the addition of GTP-tubulin dimers to the microtubule end, where a stabilizing cap forms. Below the cap, tubulin dimers are in GDP-bound state, owing to GTPase activity of alpha-tubulin. This is Tubulin beta-1 chain (TUBB1) from Cyanophora paradoxa.